The primary structure comprises 215 residues: MSKTIHYQKTHFITSAPDIRHLPEDEGIEVAFAGRSNAGKSSALNRLTNQKSLAKTSKTPGRTQLINLFKVEENCHIVDLPGYGFAQVPLEMKKKWQKSLGEYLQKRQCLQGLVVLMDIRHPLKDIDQQLVFWAVDQNIPVQILLTKADKLKSGARKAQVLKVREAAVDFGGEVEVDAFSSLKGIGVDKLRAKLDEWFAPAFELDDEFIEDLDVE.

An EngB-type G domain is found at 26–200 (EGIEVAFAGR…RAKLDEWFAP (175 aa)). GTP contacts are provided by residues 34–41 (GRSNAGKS), 61–65 (GRTQL), 79–82 (DLPG), 146–149 (TKAD), and 179–181 (FSS). Mg(2+) is bound by residues S41 and T63.

This sequence belongs to the TRAFAC class TrmE-Era-EngA-EngB-Septin-like GTPase superfamily. EngB GTPase family. Mg(2+) is required as a cofactor.

In terms of biological role, necessary for normal cell division and for the maintenance of normal septation. The polypeptide is Probable GTP-binding protein EngB (Aliivibrio fischeri (strain MJ11) (Vibrio fischeri)).